A 1936-amino-acid chain; its full sequence is Potassium channel K1 (1936 aa).

6 helical membrane-spanning segments follow: residues 175-195 (IIIL…YILL), 598-618 (VWII…LWAA), 643-663 (GYIE…GLYF), 670-690 (YIFS…SFIM), 701-721 (TYWF…AEST), and 734-754 (IIII…SGIM). Positions 772–788 (FVYFGVITMSTVGYGDY) form an intramembrane region, pore-forming. The helical transmembrane segment at 791-811 (VTPAGKCLTMFIIVTCFTFVG) threads the bilayer. A coiled-coil region spans residues 1141–1185 (DTSSMINYKSKSRVNYKMVKGTKNEFIRNQNYNINSIYYANNDNM).

Its subcellular location is the membrane. The enzyme catalyses K(+)(in) = K(+)(out). Its activity is regulated as follows. Partially inhibited by Ba(2+) and quinine. Probably insensitive to tetraethylammonium (TEA). In terms of biological role, likely a predominant potassium channel in the erythrocytic stages of parasites. Mediates transmembrane potassium transport. Required for the development of oocysts in the mosquito midgut. The chain is Potassium channel K1 from Plasmodium berghei (strain Anka).